Consider the following 535-residue polypeptide: Alpha-1,3-mannosyl-glycoprotein 4-beta-N-acetylglucosaminyltransferase A (535 aa).

Residues 1 to 6 lie on the Cytoplasmic side of the membrane; it reads MRLRNG. A helical; Signal-anchor for type II membrane protein transmembrane segment spans residues 7 to 27; sequence TVATVLVFITTFLSLSWYTAW. Residues 28-54 are a coiled coil; the sequence is QNGKEKLIAYQREFHALKERLRIAEHR. Over 28 to 535 the chain is Lumenal; that stretch reads QNGKEKLIAY…NEIHIKKMTN (508 aa). N-linked (GlcNAc...) asparagine glycosylation is found at Asn77, Asn85, and Asn458.

The protein belongs to the glycosyltransferase 54 family. A divalent metal cation serves as cofactor. N-glycosylated.

The protein localises to the golgi apparatus membrane. The protein resides in the secreted. The enzyme catalyses N(4)-{beta-D-GlcNAc-(1-&gt;2)-alpha-D-Man-(1-&gt;3)-[beta-D-GlcNAc-(1-&gt;2)-alpha-D-Man-(1-&gt;6)]-beta-D-Man-(1-&gt;4)-beta-D-GlcNAc-(1-&gt;4)-beta-D-GlcNAc}-L-asparaginyl-[protein] + UDP-N-acetyl-alpha-D-glucosamine = N(4)-{beta-D-GlcNAc-(1-&gt;2)-[beta-D-GlcNAc-(1-&gt;4)]-alpha-D-Man-(1-&gt;3)-[beta-D-GlcNAc-(1-&gt;2)-alpha-D-Man-(1-&gt;6)]-beta-D-Man-(1-&gt;4)-beta-D-GlcNAc-(1-&gt;4)-beta-D-GlcNAc}-L-asparaginyl-[protein] + UDP + H(+). The catalysed reaction is an N(4)-{beta-D-GlcNAc-(1-&gt;2)-alpha-D-Man-(1-&gt;3)-[alpha-D-Man-(1-&gt;6)]-beta-D-Man-(1-&gt;4)-beta-D-GlcNAc-(1-&gt;4)-beta-D-GlcNAc}-L-asparaginyl-[protein] + UDP-N-acetyl-alpha-D-glucosamine = an N(4)-{beta-D-GlcNAc-(1-&gt;2)-[beta-D-GlcNAc-(1-&gt;4)]-alpha-D-Man-(1-&gt;3)-[alpha-D-Man-(1-&gt;6)]-beta-D-Man-(1-&gt;4)-beta-D-GlcNAc-(1-&gt;4)-beta-D-GlcNAc}-L-asparaginyl-[protein] + UDP + H(+). It carries out the reaction an N(4)-{beta-D-GlcNAc-(1-&gt;2)-alpha-D-Man-(1-&gt;3)-[beta-D-GlcNAc-(1-&gt;2)-[beta-D-GlcNAc-(1-&gt;6)]-alpha-D-Man-(1-&gt;6)]-beta-D-Man-(1-&gt;4)-beta-D-GlcNAc-(1-&gt;4)-beta-D-GlcNAc}-L-asparaginyl-[protein] + UDP-N-acetyl-alpha-D-glucosamine = an N(4)-{beta-D-GlcNAc-(1-&gt;2)-[beta-D-GlcNAc-(1-&gt;4)]-alpha-D-Man-(1-&gt;3)-[beta-D-GlcNAc-(1-&gt;2)-[beta-D-GlcNAc-(1-&gt;6)]-alpha-D-Man-(1-&gt;6)]-beta-D-Man-(1-&gt;4)-beta-D-GlcNAc-(1-&gt;4)-beta-D-GlcNAc}-L-asparaginyl-[protein] + UDP + H(+). It catalyses the reaction an N(4)-{beta-D-GlcNAc-(1-&gt;2)-alpha-D-Man-(1-&gt;3)-[beta-D-GlcNAc-(1-&gt;2)-alpha-D-Man-(1-&gt;6)]-beta-D-Man-(1-&gt;4)-beta-D-GlcNAc-(1-&gt;4)-[alpha-L-Fuc-(1-&gt;6)]-beta-D-GlcNAc}-L-asparaginyl-[protein] + UDP-N-acetyl-alpha-D-glucosamine = N(4)-{beta-D-GlcNAc-(1-&gt;2)-[beta-D-GlcNAc-(1-&gt;4)]-alpha-D-Man-(1-&gt;3)-[beta-D-GlcNAc-(1-&gt;2)-alpha-D-Man-(1-&gt;6)]-beta-D-Man-(1-&gt;4)-beta-D-GlcNAc-(1-&gt;4)-[alpha-L-Fuc-(1-&gt;6)]-beta-D-GlcNAc}-asparaginyl-[protein] + UDP + H(+). The enzyme catalyses an N(4)-{beta-D-GlcNAc-(1-&gt;2)-alpha-D-Man-(1-&gt;3)-[beta-D-Gal-(1-&gt;4)-beta-D-GlcNAc-(1-&gt;2)-alpha-D-Man-(1-&gt;6)]-beta-D-Man-(1-&gt;4)-beta-D-GlcNAc-(1-&gt;4)-beta-D-GlcNAc}-L-asparaginyl-[protein] + UDP-N-acetyl-alpha-D-glucosamine = an N(4)-{beta-D-GlcNAc-(1-&gt;2)-[beta-D-GlcNAc-(1-&gt;4)]-alpha-D-Man-(1-&gt;3)-[beta-D-Gal-(1-&gt;4)-beta-D-GlcNAc-(1-&gt;2)-alpha-D-Man-(1-&gt;6)]-beta-D-Man-(1-&gt;4)-beta-D-GlcNAc-(1-&gt;4)-beta-D-GlcNAc}-L-asparaginyl-[protein] + UDP + H(+). The catalysed reaction is N(4)-{beta-D-GlcNAc-(1-&gt;2)-alpha-D-Man-(1-&gt;3)-[alpha-D-Man-(1-&gt;3)-{alpha-D-Man-(1-&gt;6)}-alpha-D-Man-(1-&gt;6)]-beta-D-Man-(1-&gt;4)-beta-D-GlcNAc-(1-&gt;4)-beta-D-GlcNAc}-asparaginyl-[protein] + UDP-N-acetyl-alpha-D-glucosamine = N(4)-{beta-D-GlcNAc-(1-&gt;2)-[beta-D-GlcNAc-(1-&gt;4)]-alpha-D-Man-(1-&gt;3)-[alpha-D-Man-(1-&gt;3)-{alpha-D-Man-(1-&gt;6)}-alpha-D-Man-(1-&gt;6)]-beta-D-Man-(1-&gt;4)-beta-D-GlcNAc-(1-&gt;4)-beta-D-GlcNAc}-asparaginyl-[protein] + UDP + H(+). It carries out the reaction N(4)-{beta-D-GlcNAc-(1-&gt;2)-alpha-D-Man-(1-&gt;3)-beta-D-Man-(1-&gt;4)-beta-D-GlcNAc-(1-&gt;4)-beta-D-GlcNAc}-asparaginyl-[protein] + UDP-N-acetyl-alpha-D-glucosamine = N(4)-{beta-D-GlcNAc-(1-&gt;2)-[beta-D-GlcNAc-(1-&gt;4)]-alpha-D-Man-(1-&gt;3)-beta-D-Man-(1-&gt;4)-beta-D-GlcNAc-(1-&gt;4)-beta-D-GlcNAc}-asparaginyl-[protein] + UDP + H(+). The protein operates within protein modification; protein glycosylation. With respect to regulation, inhibited by UDP. In terms of biological role, glycosyltransferase that catalyze the transfer of GlcNAc from UDP-GlcNAc to the GlcNAcbeta1-2Manalpha1-3 arm of the core structure of N-linked glycans through a beta1-4 linkage and participates in the production of tri- and tetra-antennary N-linked sugar chains. Involved in glucose transport by mediating SLC2A2/GLUT2 glycosylation, thereby controlling cell-surface expression of SLC2A2 in pancreatic beta cells. The chain is Alpha-1,3-mannosyl-glycoprotein 4-beta-N-acetylglucosaminyltransferase A from Gallus gallus (Chicken).